We begin with the raw amino-acid sequence, 187 residues long: Putative protein YbeM (187 aa).

One can recognise a CN hydrolase domain in the interval 1–163; sequence MMTTILTIHV…PALIMAEVTP (163 aa).

It belongs to the carbon-nitrogen hydrolase superfamily. NIT1/NIT2 family.

Its function is as follows. Pseudogene resulting from a nucleotide deletion that introduces a premature stop codon at position 66. This is the C-terminal fragment. The intact protein (AC A0A140NCB4) hydrolyzes deaminated glutathione (dGSH, 2-oxoglutaramate) to alpha-ketoglutarate (alpha-KG) and cysteinylglycine, has less activity against alpha-ketoglutaramate (a-KGM) and no activity on glutathione or L-glutamine. May function as a metabolite repair enzyme. The protein is Putative protein YbeM (ybeM) of Escherichia coli (strain K12).